Reading from the N-terminus, the 251-residue chain is Flagellar basal-body rod protein FlgF (251 aa).

The protein belongs to the flagella basal body rod proteins family. As to quaternary structure, the basal body constitutes a major portion of the flagellar organelle and consists of five rings (E,L,P,S, and M) mounted on a central rod. The rod consists of about 26 subunits of FlgG in the distal portion, and FlgB, FlgC and FlgF are thought to build up the proximal portion of the rod with about 6 subunits each.

The protein localises to the bacterial flagellum basal body. The polypeptide is Flagellar basal-body rod protein FlgF (flgF) (Salmonella typhimurium (strain LT2 / SGSC1412 / ATCC 700720)).